The following is a 519-amino-acid chain: MIPDVSQALSWLEAHPDALNGIGRGIERETLRVRPDGYLATTAHPTSLGAALTHKWITTDFAEALLEFITPVDRDIDRLLAFLRDIHRHTARELGEERMWPMSMPCRVERDGDIELAQYGSSNIGQMKTLYRQGLKNRYGALMQVISGVHYNFSLPLSFWQAWAGVNDAESGKEAISAGYLRLIRNYYRFGWVIPYLFGASPAICSSFLQGKESKLPFEHGDNGMLSLPYATSLRLSDLGYTNKSQSSLGIAFNNLPDYISGLKAAIKTPSEEFAAMGVKDKNGDWLQLNTNVLQIENELYAPIRPKRVTRSGEAPSDALQRGGIEYIEVRSLDINPFSPIGVDADQVRFLDLFLIWCALADAPDMDSAELACTRKNWNRVILEGRKPGQTIGIGCGKTERPLVDVGKALFRDLLRVAKTLDSQGGECQYQEVCERLAASFDDPDLTYSARFLRTLQDNGIEKTGMALAEQYRAQLREEPLQVLTEQRFHDEAQRSRQSQSEIEESDTLSLEAFLQGKS.

The protein belongs to the glutamate--cysteine ligase type 1 family. Type 1 subfamily.

It carries out the reaction L-cysteine + L-glutamate + ATP = gamma-L-glutamyl-L-cysteine + ADP + phosphate + H(+). It functions in the pathway sulfur metabolism; glutathione biosynthesis; glutathione from L-cysteine and L-glutamate: step 1/2. This is Glutamate--cysteine ligase from Erwinia tasmaniensis (strain DSM 17950 / CFBP 7177 / CIP 109463 / NCPPB 4357 / Et1/99).